The sequence spans 436 residues: MSVTVETLENLERKVVLSLPWSEINAETDKKLKQTQRRAKIDGFRPGKAPLKMIAQMYGASAQNDVINELVQRRFHDVAVAQELKVAGFPRFEGVEEQDDKESFKVAAIFEVFPEVVIGDLSAQEVEKVTASVGDAEVDQTVEILRKQRTRFNHVEREARNGDRVIIDFEGKIDGEPFAGGASKNYAFVLGASQMLPEFEAGVVGMKAGESKDVTVNFPEDYHGKDVAGKTAVFTITLNNVSEATLPEVDADFAKALGIADGDVAKMREEVQKNVSREVERRVNEQTKESVMNALLKAVELKAPVALVNEEAARLANEMKQNFVNQGMADAANLDLPLDMFKEQAERRVSLGLILAKLVDENKLEPTEEQIKAVVANFAESYEDPQEVIDWYYADPSRLQAPTSLAVESNVVDFVLGKAKVNEKALSFDEVMGAQA.

The PPIase FKBP-type domain occupies 162 to 247; that stretch reads GDRVIIDFEG…LNNVSEATLP (86 aa).

This sequence belongs to the FKBP-type PPIase family. Tig subfamily.

It is found in the cytoplasm. The enzyme catalyses [protein]-peptidylproline (omega=180) = [protein]-peptidylproline (omega=0). Involved in protein export. Acts as a chaperone by maintaining the newly synthesized protein in an open conformation. Functions as a peptidyl-prolyl cis-trans isomerase. In Neisseria meningitidis serogroup C (strain 053442), this protein is Trigger factor.